Here is a 592-residue protein sequence, read N- to C-terminus: MRNTHNPNETEASEDAENDTQSESDLSFDHGSSEKLNRASLPKTQNSAIPQSNALNTTPNESTSQIDSSPKIPSAVPHISTPNPSSGASTPNIKRVSDFKFGEILGEGSYSTVLTATENSTKREYAIKVLDKRHIIKEKKEKYVNIEKEALCILSKHPGFIKLFYTFQDAHNLYFVLSLARNGELLDYINKLGRFNEICAQYYAALIVDSIDYMHGRGVIHRDLKPENILLDDNMRTKITDFGSAKILNSSHGSHEEDTHHADKPQAHSRSFVGTARYVSPEVLSDKIAGTASDIWAFGCILFQMLAGKPPFVAGNEYLTFQSILHLSYEIPPDISDVASDLIKKLLVLDPKDRLTVDEIHQHPFFNGIKFDNTLWELPPPRLKPFGHTSVLSLSVPNASNKHENGDLTSPLGVPSMVSASTNAAPSPVGTFNRGTLLPCQSNLEEENKEWSSILQDDEKISKIGTLNVYSMSGINGNDAFRFFSSLFRKRKPRTFILTNFGRYLCVASDGEGRKTVKEEIPIKSVGMRCRMVKNNEHGWVVETPTKSWSFEDPNGPASAWVELLDKASSISLPFGNHSVTSFSRSIARSAV.

Positions 1–10 (MRNTHNPNET) are enriched in polar residues. Positions 1–92 (MRNTHNPNET…NPSSGASTPN (92 aa)) are disordered. Positions 11–22 (EASEDAENDTQS) are enriched in acidic residues. Over residues 27-37 (SFDHGSSEKLN) the composition is skewed to basic and acidic residues. The segment covering 42-68 (PKTQNSAIPQSNALNTTPNESTSQIDS) has biased composition (polar residues). 2 positions are modified to phosphoserine: Ser64 and Ser69. Positions 80–92 (STPNPSSGASTPN) are enriched in polar residues. Residues 99 to 366 (FKFGEILGEG…VDEIHQHPFF (268 aa)) enclose the Protein kinase domain. ATP-binding positions include 109–111 (SYS) and Lys128. The tract at residues 130–175 (LDKRHIIKEKKEKYVNIEKEALCILSKHPGFIKLFYTFQDAHNLYF) is PIF-pocket. ATP contacts are provided by residues 178-180 (SLA) and Glu184. Asp223 acts as the Proton acceptor in catalysis. Glu227 and Asp241 together coordinate ATP. Positions 461–572 (ISKIGTLNVY…ELLDKASSIS (112 aa)) constitute a PH domain.

Belongs to the protein kinase superfamily. AGC Ser/Thr protein kinase family. PDPK1 subfamily.

The protein resides in the cytoplasm. It carries out the reaction L-seryl-[protein] + ATP = O-phospho-L-seryl-[protein] + ADP + H(+). The enzyme catalyses L-threonyl-[protein] + ATP = O-phospho-L-threonyl-[protein] + ADP + H(+). Involved in the control of sexual development and cell growth under stressed conditions. Phosphorylates AGC kinase gad8 at 'Thr-387', activating gad8 kinase activity and promoting sexual development. Phosphorylates AGC kinase psk1 at 'Ser-248', activating psk1 kinase activity and promoting phosphorylation of ribosomal protein S6. This is Serine/threonine-protein kinase ksg1 from Schizosaccharomyces pombe (strain 972 / ATCC 24843) (Fission yeast).